Here is a 425-residue protein sequence, read N- to C-terminus: bZIP transcription factor RISBZ2 (425 aa).

2 disordered regions span residues 1–50 (MERV…GGGG) and 169–257 (NSIG…AAHL). Residues 30-50 (QGGGGVASGGGGGVAGGGGGG) are compositionally biased toward gly residues. The span at 171 to 182 (IGGNATPVQNML) shows a compositional bias: polar residues. Over residues 213–222 (SDDDDMEGEA) the composition is skewed to acidic residues. The segment covering 231-247 (ADQRLQRRKQSNRESAR) has biased composition (basic and acidic residues). One can recognise a bZIP domain in the interval 232–295 (DQRLQRRKQS…NDAAVDNRVL (64 aa)). Residues 234 to 253 (RLQRRKQSNRESARRSRSRK) are basic motif. A leucine-zipper region spans residues 260 to 274 (LEAQVSQLRVENSSL). Positions 334 to 354 (MPFNSSPSEATSDAAVPIQDD) are disordered.

In terms of assembly, heterodimer with RISBZ1/BZIP58.

It localises to the nucleus. In terms of biological role, transcriptional activator that binds to the DNA specific sequence 5'-GCCACGT[AC]AG-3' found in the alpha-globulin gene promoter. Does not bind to promoters of other major storage genes such as glutelin, prolamin and albumin. Binds to the DNA specific sequence 5'-TGAGTCA-3' found in seed storage protein gene promoters. This chain is bZIP transcription factor RISBZ2, found in Oryza sativa subsp. japonica (Rice).